A 475-amino-acid polypeptide reads, in one-letter code: 3-isopropylmalate dehydratase large subunit (475 aa).

Cys-349, Cys-409, and Cys-412 together coordinate [4Fe-4S] cluster.

This sequence belongs to the aconitase/IPM isomerase family. LeuC type 1 subfamily. In terms of assembly, heterodimer of LeuC and LeuD. The cofactor is [4Fe-4S] cluster.

The catalysed reaction is (2R,3S)-3-isopropylmalate = (2S)-2-isopropylmalate. It participates in amino-acid biosynthesis; L-leucine biosynthesis; L-leucine from 3-methyl-2-oxobutanoate: step 2/4. Functionally, catalyzes the isomerization between 2-isopropylmalate and 3-isopropylmalate, via the formation of 2-isopropylmaleate. This Cereibacter sphaeroides (strain KD131 / KCTC 12085) (Rhodobacter sphaeroides) protein is 3-isopropylmalate dehydratase large subunit.